A 187-amino-acid polypeptide reads, in one-letter code: Ribosome-recycling factor (187 aa).

This sequence belongs to the RRF family.

The protein resides in the cytoplasm. In terms of biological role, responsible for the release of ribosomes from messenger RNA at the termination of protein biosynthesis. May increase the efficiency of translation by recycling ribosomes from one round of translation to another. The polypeptide is Ribosome-recycling factor (Methylobacterium nodulans (strain LMG 21967 / CNCM I-2342 / ORS 2060)).